A 462-amino-acid chain; its full sequence is Protein phosphatase 1M (462 aa).

Basic residues predominate over residues 1-10 (MSAGWFRRRF). The tract at residues 1 to 66 (MSAGWFRRRF…PVRSPARGRT (66 aa)) is disordered. In terms of domain architecture, PPM-type phosphatase spans 100–452 (EFGIEEDQEW…DDVSVFVIPL (353 aa)). Mn(2+) is bound by residues Asp127 and Gly128.

It belongs to the PP2C family. The cofactor is Mg(2+). Mn(2+) is required as a cofactor. In terms of tissue distribution, widely expressed with highest levels in testis and lower levels in lung, kidney and brain.

Its subcellular location is the nucleus. The catalysed reaction is O-phospho-L-seryl-[protein] + H2O = L-seryl-[protein] + phosphate. It catalyses the reaction O-phospho-L-threonyl-[protein] + H2O = L-threonyl-[protein] + phosphate. The sequence is that of Protein phosphatase 1M from Mus musculus (Mouse).